The chain runs to 123 residues: Plasminogen (123 aa).

One can recognise a Kringle domain in the interval 40–118 (DCYHGNGQSY…RWEFCNLKKC (79 aa)). Intrachain disulfides connect C41–C118, C62–C101, and C90–C113.

This sequence belongs to the peptidase S1 family. Plasminogen subfamily. Interacts with CSPG4 and AMOT. Interacts (via the Kringle domains) with HRG; the interaction tethers PLG to the cell surface and enhances its activation. Interacts (via Kringle 4 domain) with ADA; the interaction stimulates PLG activation when in complex with DPP4. Angiostatin: Interacts with ATP5F1A; the interaction inhibits most of the angiogenic effects of angiostatin.

The protein localises to the secreted. It carries out the reaction Preferential cleavage: Lys-|-Xaa &gt; Arg-|-Xaa, higher selectivity than trypsin. Converts fibrin into soluble products.. With respect to regulation, converted into plasmin by plasminogen activators, both plasminogen and its activator being bound to fibrin. Cannot be activated with streptokinase. Functionally, plasmin dissolves the fibrin of blood clots and acts as a proteolytic factor in a variety of other processes including embryonic development, tissue remodeling, tumor invasion, and inflammation. In ovulation, weakens the walls of the Graafian follicle. It activates the urokinase-type plasminogen activator, collagenases and several complement zymogens, such as C1, C4 and C5. Cleavage of fibronectin and laminin leads to cell detachment and apoptosis. Also cleaves fibrin, thrombospondin and von Willebrand factor. Its role in tissue remodeling and tumor invasion may be modulated by CSPG4. Binds to cells. The chain is Plasminogen (PLG) from Capra hircus (Goat).